A 244-amino-acid chain; its full sequence is Phosphonates import ATP-binding protein PhnC (244 aa).

Residues 6 to 244 enclose the ABC transporter domain; that stretch reads IECHNLETAY…LQAQFVVNSQ (239 aa). Position 41–48 (41–48) interacts with ATP; the sequence is GLNGAGKS.

The protein belongs to the ABC transporter superfamily. Phosphonates importer (TC 3.A.1.9.1) family. The complex is composed of two ATP-binding proteins (PhnC), two transmembrane proteins (PhnE) and a solute-binding protein (PhnD).

It localises to the cell inner membrane. The enzyme catalyses phosphonate(out) + ATP + H2O = phosphonate(in) + ADP + phosphate + H(+). In terms of biological role, part of the ABC transporter complex PhnCDE involved in phosphonates import. Responsible for energy coupling to the transport system. The polypeptide is Phosphonates import ATP-binding protein PhnC (Trichormus variabilis (strain ATCC 29413 / PCC 7937) (Anabaena variabilis)).